Here is a 314-residue protein sequence, read N- to C-terminus: 2-methoxy-6-polyprenyl-1,4-benzoquinol methylase, mitochondrial (314 aa).

Residues 1–19 (MLQSLNRSVRYLSTSIGSR) constitute a mitochondrion transit peptide. S-adenosyl-L-methionine contacts are provided by residues Thr109, Asp154, 186 to 187 (NS), and Ser203.

This sequence belongs to the class I-like SAM-binding methyltransferase superfamily. MenG/UbiE family. As to quaternary structure, component of a multi-subunit COQ enzyme complex.

It localises to the mitochondrion inner membrane. It carries out the reaction a 2-methoxy-6-(all-trans-polyprenyl)benzene-1,4-diol + S-adenosyl-L-methionine = a 5-methoxy-2-methyl-3-(all-trans-polyprenyl)benzene-1,4-diol + S-adenosyl-L-homocysteine + H(+). The protein operates within cofactor biosynthesis; ubiquinone biosynthesis. Its function is as follows. Methyltransferase required for the conversion of 2-polyprenyl-6-methoxy-1,4-benzoquinol (DDMQH2) to 2-polyprenyl-3-methyl-6-methoxy-1,4-benzoquinol (DMQH2). This chain is 2-methoxy-6-polyprenyl-1,4-benzoquinol methylase, mitochondrial, found in Dictyostelium discoideum (Social amoeba).